Consider the following 200-residue polypeptide: MEGLTLIVVMMSSFMLGGQGQQISTPCTSSMISTFTPCLNFITGSSGGSVTPTAGCCDSLKTLTNTGMGCACLILTANVPLPTGFINRTLALALPRACKMGGVPIQCQAAGTPLPAPGQVPFLIAPPPQVSAFSPGASKAAGTTPTQAPAPDTPADGPTGPTTKSGIRPVDQPMQPTGLAQSSTSPFLPLLFISLILLNL.

The first 20 residues, 1-20, serve as a signal peptide directing secretion; the sequence is MEGLTLIVVMMSSFMLGGQG. Cystine bridges form between cysteine 27/cysteine 72, cysteine 38/cysteine 56, cysteine 57/cysteine 98, and cysteine 70/cysteine 107. N-linked (GlcNAc...) asparagine glycosylation is present at asparagine 87. Positions 134–182 are disordered; that stretch reads SPGASKAAGTTPTQAPAPDTPADGPTGPTTKSGIRPVDQPMQPTGLAQS. A compositionally biased stretch (low complexity) spans 140–163; the sequence is AAGTTPTQAPAPDTPADGPTGPTT. A lipid anchor (GPI-anchor amidated threonine) is attached at threonine 177. The propeptide at 178 to 200 is removed in mature form; sequence GLAQSSTSPFLPLLFISLILLNL.

Belongs to the plant LTP family. In terms of tissue distribution, expressed in seedlings, preferentially in hypocotyls and roots. Also observed in siliques.

The protein localises to the cell membrane. Functionally, essential protein involved in female gametophyte development. Probable lipid transfer protein. The protein is Non-specific lipid transfer protein GPI-anchored 16 of Arabidopsis thaliana (Mouse-ear cress).